A 186-amino-acid polypeptide reads, in one-letter code: Large ribosomal subunit protein uL5 (186 aa).

It belongs to the universal ribosomal protein uL5 family. As to quaternary structure, part of the 50S ribosomal subunit; part of the 5S rRNA/L5/L18/L25 subcomplex. Contacts the 5S rRNA and the P site tRNA. Forms a bridge to the 30S subunit in the 70S ribosome.

Functionally, this is one of the proteins that bind and probably mediate the attachment of the 5S RNA into the large ribosomal subunit, where it forms part of the central protuberance. In the 70S ribosome it contacts protein S13 of the 30S subunit (bridge B1b), connecting the 2 subunits; this bridge is implicated in subunit movement. Contacts the P site tRNA; the 5S rRNA and some of its associated proteins might help stabilize positioning of ribosome-bound tRNAs. This chain is Large ribosomal subunit protein uL5, found in Phenylobacterium zucineum (strain HLK1).